Reading from the N-terminus, the 51-residue chain is Glutamate dehydrogenase (51 aa).

Residue lysine 31 participates in substrate binding.

This sequence belongs to the Glu/Leu/Phe/Val dehydrogenases family. Homohexamer.

Its subcellular location is the mitochondrion matrix. It carries out the reaction L-glutamate + NAD(+) + H2O = 2-oxoglutarate + NH4(+) + NADH + H(+). The enzyme catalyses L-glutamate + NADP(+) + H2O = 2-oxoglutarate + NH4(+) + NADPH + H(+). Functionally, mitochondrial glutamate dehydrogenase that converts L-glutamate into alpha-ketoglutarate. Plays a key role in glutamine anaplerosis by producing alpha-ketoglutarate, an important intermediate in the tricarboxylic acid cycle. The sequence is that of Glutamate dehydrogenase from Electrophorus electricus (Electric eel).